Here is an 883-residue protein sequence, read N- to C-terminus: Pyruvate, phosphate dikinase 2 (883 aa).

A disordered region spans residues 1-21 (MAPAPCGRSSQRVFHFGKGKS). Residue His-465 is the Tele-phosphohistidine intermediate of the active site. Positions 571, 628, 757, 778, 779, 780, and 781 each coordinate substrate. A Mg(2+)-binding site is contributed by Glu-757. Asp-781 provides a ligand contact to Mg(2+). Cys-843 (proton donor) is an active-site residue.

Belongs to the PEP-utilizing enzyme family. Mg(2+) serves as cofactor. As to expression, expressed in leaves, roots and stems.

The protein resides in the cytoplasm. The enzyme catalyses pyruvate + phosphate + ATP = phosphoenolpyruvate + AMP + diphosphate + H(+). Formation of phosphoenolpyruvate, which is the primary acceptor of CO(2) in C4 and some Crassulacean acid metabolism plants. The protein is Pyruvate, phosphate dikinase 2 of Zea mays (Maize).